Consider the following 191-residue polypeptide: Pyridoxal 5'-phosphate synthase subunit PdxT (191 aa).

48–50 (GES) is a binding site for L-glutamine. The active-site Nucleophile is Cys-81. L-glutamine contacts are provided by residues Arg-109 and 136 to 137 (IR). Residues His-172 and Glu-174 each act as charge relay system in the active site.

Belongs to the glutaminase PdxT/SNO family. As to quaternary structure, in the presence of PdxS, forms a dodecamer of heterodimers. Only shows activity in the heterodimer.

The enzyme catalyses aldehydo-D-ribose 5-phosphate + D-glyceraldehyde 3-phosphate + L-glutamine = pyridoxal 5'-phosphate + L-glutamate + phosphate + 3 H2O + H(+). It catalyses the reaction L-glutamine + H2O = L-glutamate + NH4(+). Its pathway is cofactor biosynthesis; pyridoxal 5'-phosphate biosynthesis. Catalyzes the hydrolysis of glutamine to glutamate and ammonia as part of the biosynthesis of pyridoxal 5'-phosphate. The resulting ammonia molecule is channeled to the active site of PdxS. The sequence is that of Pyridoxal 5'-phosphate synthase subunit PdxT from Thermus thermophilus (strain ATCC 27634 / DSM 579 / HB8).